The chain runs to 575 residues: Transport inhibitor response 1-like protein Os04g0395600 (575 aa).

Residues 1–45 enclose the F-box domain; it reads MTYFPEEVVEHIFSFLPAQRDRNTVSLVCKVWYEIERLSRRGVFV. K69 provides a ligand contact to 1D-myo-inositol hexakisphosphate. Positions 76–77 are interaction with auxin-responsive proteins; it reads DF. 1D-myo-inositol hexakisphosphate is bound by residues 108–109 and R340; that span reads KR. Positions 343-348 are interaction with auxin-responsive proteins; it reads PSDFYV. A 1D-myo-inositol hexakisphosphate-binding site is contributed by 396–398; that stretch reads RFR. The tract at residues 400-404 is interaction with auxin-responsive proteins; it reads CILEP. R431 is a 1D-myo-inositol hexakisphosphate binding site. The tract at residues 459 to 460 is interaction with auxin-responsive proteins; it reads AF. 1D-myo-inositol hexakisphosphate-binding positions include 479 to 480 and R504; that span reads RK.

In terms of assembly, part of a SCF (SKP1-cullin-F-box) protein ligase complex. May interact with auxin and auxin-responsive proteins.

It localises to the nucleus. The protein operates within protein modification; protein ubiquitination. This chain is Transport inhibitor response 1-like protein Os04g0395600, found in Oryza sativa subsp. japonica (Rice).